The primary structure comprises 583 residues: MATSTPSRAREHASAAQSPGSPTRISRMQEKEDLRHLNDRLAAYIERVRSLEADKSLLKIQLEEREEVSSREVTNLRQLYETELADARKLLDQTANERARLQVELGKVREEYRQLQARNSKKENDLSLAQNQLRDLESKLNTKEAELATALSGKRGLEEQLQEQRAQIAGLESSLRDTTKQLHDEMLWRVDLENKMQTIREQLDFQKNIHTQEVKEIKKRHDTRIVEIDSGRRVEFESKLAEALQELRRDHEQQILEYKEHLEKNFSAKLENAQLAAAKNSDYASATREEIMATKLRVDTLSSQLNHYQKQNSALEAKVRDLQDMLDRAHDMHRRQMTEKDREVTEIRQTLQGQLEEYEQLLDVKLALDMEINAYRKMLEGEEQRLKLSPSPSQRSTVSRASTSQTSRLLRGKKRKLDETGRSVTKRSYKVVQQASSTGPVSVEDIDPEGNYVRLLNNTEEDFSLHGWVVKRMHMSLPEIAFKLPCRFILKSSQRVTIWAAGAGAVHSPPTDLVWKSQKTWGTGDNIKITLLDSTGEECAERTLYRVIGEEGETDEDFVEEEELERQFRSQSHQSVDPSCSIM.

The segment at 1–30 (MATSTPSRAREHASAAQSPGSPTRISRMQE) is disordered. Residues 2-32 (ATSTPSRAREHASAAQSPGSPTRISRMQEKE) are head. Residues 15 to 26 (AAQSPGSPTRIS) are compositionally biased toward polar residues. Position 21 is a phosphoserine (S21). Positions 30–386 (EKEDLRHLND…KMLEGEEQRL (357 aa)) constitute an IF rod domain. Residues 33–67 (DLRHLNDRLAAYIERVRSLEADKSLLKIQLEEREE) are coil 1A. The tract at residues 68–79 (VSSREVTNLRQL) is linker 1. A coil 1B region spans residues 80–215 (YETELADARK…QKNIHTQEVK (136 aa)). The interval 216–242 (EIKKRHDTRIVEIDSGRRVEFESKLAE) is linker 2. Residues 243–384 (ALQELRRDHE…YRKMLEGEEQ (142 aa)) form a coil 2 region. The segment at 383 to 431 (EQRLKLSPSPSQRSTVSRASTSQTSRLLRGKKRKLDETGRSVTKRSYKV) is disordered. The segment at 385–580 (RLKLSPSPSQ…QSHQSVDPSC (196 aa)) is tail. Over residues 390-408 (PSPSQRSTVSRASTSQTSR) the composition is skewed to polar residues. At S391 the chain carries Phosphoserine. The LTD domain maps to 429-546 (YKVVQQASST…EECAERTLYR (118 aa)). A Cysteine methyl ester modification is found at C580. A lipid anchor (S-farnesyl cysteine) is attached at C580. Residues 581–583 (SIM) constitute a propeptide, removed in mature form.

It belongs to the intermediate filament family. Post-translationally, phosphorylation plays a key role in lamin organization, subcellular localization and nuclear envelope disintegration. Phosphorylation by CDK1 at Ser-21 at the onset of mitosis drives lamin disassembly and nuclear envelope breakdown.

The protein resides in the nucleus lamina. Its subcellular location is the nucleus envelope. It is found in the nucleus. The protein localises to the nucleoplasm. It localises to the nucleus matrix. Lamins are intermediate filament proteins that assemble into a filamentous meshwork, and which constitute the major components of the nuclear lamina, a fibrous layer on the nucleoplasmic side of the inner nuclear membrane. Lamins provide a framework for the nuclear envelope, bridging the nuclear envelope and chromatin, thereby playing an important role in nuclear assembly, chromatin organization, nuclear membrane and telomere dynamics. The structural integrity of the lamina is strictly controlled by the cell cycle, as seen by the disintegration and formation of the nuclear envelope in prophase and telophase, respectively. This Xenopus laevis (African clawed frog) protein is Lamin-B3 (lmnb3.L).